The primary structure comprises 95 residues: Translation initiation factor 1A (95 aa).

In terms of domain architecture, S1-like spans Gly7–Glu81.

It belongs to the eIF-1A family.

Its function is as follows. Seems to be required for maximal rate of protein biosynthesis. Enhances ribosome dissociation into subunits and stabilizes the binding of the initiator Met-tRNA(I) to 40 S ribosomal subunits. This chain is Translation initiation factor 1A (eIF1A), found in Halobacterium salinarum (strain ATCC 29341 / DSM 671 / R1).